The primary structure comprises 255 residues: Bouquet formation protein 3 (255 aa).

A run of 8 helical transmembrane segments spans residues 13–33 (IKVS…NYHL), 48–68 (IPYW…LLLQ), 72–94 (LGYG…YYLT), 99–116 (IAWA…ARCF), 132–152 (YSVS…LNYI), 172–192 (SLVA…GYVI), 205–225 (SLFL…SILF), and 235–255 (VVGA…ALSL).

It is found in the endoplasmic reticulum membrane. The protein localises to the nucleus inner membrane. Functionally, connects telomeres to the nuclear envelop (NE) during both vegetative growth and meiosis. This connection ensures clustering of telomeres to the spindle pole body (SPB) when cells enter meiotic prophase. In Schizosaccharomyces pombe (strain 972 / ATCC 24843) (Fission yeast), this protein is Bouquet formation protein 3 (bqt3).